The sequence spans 198 residues: uncharacterized protein (198 aa).

The N-terminal stretch at 1 to 28 (MHPTQRKLMKRIILFLSLLFCIACPAIA) is a signal peptide.

It belongs to the fimbrial protein family.

The protein resides in the fimbrium. Functionally, part of the yadCKLM-htrE-yadVN fimbrial operon. Could contribute to adhesion to various surfaces in specific environmental niches. This is an uncharacterized protein from Escherichia coli (strain K12).